Here is a 362-residue protein sequence, read N- to C-terminus: Alcohol dehydrogenase 13 (362 aa).

Positions 51, 73, 104, 107, 110, 118, and 168 each coordinate Zn(2+). Residue H73 coordinates substrate. Residues 193 to 198 (GLGGLG) and 280 to 282 (VGA) each bind NAD(+).

This sequence belongs to the zinc-containing alcohol dehydrogenase family. Class-III subfamily. In terms of assembly, homodimer. Zn(2+) serves as cofactor.

This chain is Alcohol dehydrogenase 13, found in Catharanthus roseus (Madagascar periwinkle).